Reading from the N-terminus, the 236-residue chain is Transmembrane protein 70 homolog, mitochondrial (236 aa).

The transit peptide at 1-64 directs the protein to the mitochondrion; the sequence is MLGLRAMLPK…WLSVKSTKTE (64 aa). The next 2 helical transmembrane spans lie at 83 to 103 and 116 to 136; these read MVKF…PILL and VFLC…LHFI.

The protein belongs to the TMEM70 family. In terms of assembly, associates with mitochondrial complex I assembly intermediates during its biogenesis.

It localises to the mitochondrion membrane. In terms of biological role, scaffold protein that participates in the c-ring assembly of mitochondrial ATP synthase (F(1)F(0) ATP synthase or complex V). Also binds the mitochondrial proton-transporting ATP synthase complex I and may play a role in the stability of its membrane-bound subassemblies. In Drosophila melanogaster (Fruit fly), this protein is Transmembrane protein 70 homolog, mitochondrial.